A 303-amino-acid polypeptide reads, in one-letter code: Elongation factor Ts (303 aa).

The segment at 79–82 (TDFT) is involved in Mg(2+) ion dislocation from EF-Tu.

This sequence belongs to the EF-Ts family.

It localises to the cytoplasm. Its function is as follows. Associates with the EF-Tu.GDP complex and induces the exchange of GDP to GTP. It remains bound to the aminoacyl-tRNA.EF-Tu.GTP complex up to the GTP hydrolysis stage on the ribosome. The chain is Elongation factor Ts from Magnetococcus marinus (strain ATCC BAA-1437 / JCM 17883 / MC-1).